Here is a 418-residue protein sequence, read N- to C-terminus: DnaJ protein homolog 2 (418 aa).

Residues 11-76 (NTKYYEVLGV…REIYDQYGEE (66 aa)) enclose the J domain. The CR-type zinc-finger motif lies at 135–219 (GTSKKLSLSR…CKGEKVVQQK (85 aa)). 4 CXXCXGXG motif repeats span residues 148–155 (CTKCKGKG), 164–171 (CASCQGSG), 191–198 (CNECKGTG), and 207–214 (CPQCKGEK). The disordered stretch occupies residues 382–418 (VNIEEEMRRKQHQQAQEAYDEDDEGHGGAQRVQCAQQ). The residue at position 415 (Cys415) is a Cysteine methyl ester. Cys415 carries the S-farnesyl cysteine lipid modification. A propeptide spans 416 to 418 (AQQ) (removed in mature form).

It is found in the membrane. In terms of biological role, plays a continuous role in plant development probably in the structural organization of compartments. The protein is DnaJ protein homolog 2 (LDJ2) of Allium porrum (Leek).